Consider the following 694-residue polypeptide: Elongation factor G (694 aa).

Residues 8–287 (EDYRNFGIMA…AVVSYLPSPI (280 aa)) form the tr-type G domain. Residues 17-24 (AHIDAGKT), 86-90 (DTPGH), and 140-143 (NKMD) each bind GTP.

It belongs to the TRAFAC class translation factor GTPase superfamily. Classic translation factor GTPase family. EF-G/EF-2 subfamily.

The protein resides in the cytoplasm. Catalyzes the GTP-dependent ribosomal translocation step during translation elongation. During this step, the ribosome changes from the pre-translocational (PRE) to the post-translocational (POST) state as the newly formed A-site-bound peptidyl-tRNA and P-site-bound deacylated tRNA move to the P and E sites, respectively. Catalyzes the coordinated movement of the two tRNA molecules, the mRNA and conformational changes in the ribosome. The protein is Elongation factor G of Bartonella tribocorum (strain CIP 105476 / IBS 506).